The sequence spans 464 residues: Soluble pyridine nucleotide transhydrogenase (464 aa).

An FAD-binding site is contributed by 35 to 44 (DSRRQVGGNC).

Belongs to the class-I pyridine nucleotide-disulfide oxidoreductase family. The cofactor is FAD.

It localises to the cytoplasm. The catalysed reaction is NAD(+) + NADPH = NADH + NADP(+). Functionally, conversion of NADPH, generated by peripheral catabolic pathways, to NADH, which can enter the respiratory chain for energy generation. The sequence is that of Soluble pyridine nucleotide transhydrogenase from Pseudomonas savastanoi pv. phaseolicola (strain 1448A / Race 6) (Pseudomonas syringae pv. phaseolicola (strain 1448A / Race 6)).